Here is a 367-residue protein sequence, read N- to C-terminus: Glutamate 5-kinase (367 aa).

Position 10 (Lys10) interacts with ATP. Residues Ser50, Asp137, and Asn149 each contribute to the substrate site. ATP contacts are provided by residues 169–170 and 211–217; these read TD and TGGMATK. The PUA domain occupies 275 to 353; it reads AGEITVDDGA…QQISEILGYE (79 aa).

This sequence belongs to the glutamate 5-kinase family.

The protein localises to the cytoplasm. The enzyme catalyses L-glutamate + ATP = L-glutamyl 5-phosphate + ADP. Its pathway is amino-acid biosynthesis; L-proline biosynthesis; L-glutamate 5-semialdehyde from L-glutamate: step 1/2. Its function is as follows. Catalyzes the transfer of a phosphate group to glutamate to form L-glutamate 5-phosphate. This chain is Glutamate 5-kinase, found in Yersinia enterocolitica serotype O:8 / biotype 1B (strain NCTC 13174 / 8081).